The sequence spans 451 residues: Tubulin gamma-2 chain (451 aa).

Serine 131 carries the post-translational modification Phosphoserine; by BRSK1. Residue 142 to 148 (AGGTGSG) participates in GTP binding.

The protein belongs to the tubulin family. Component of the gamma-tubulin ring complex (gTuRC) consisting of TUBGCP2, TUBGCP3, TUBGCP4, TUBGCP5 and TUBGCP6 and gamma-tubulin TUBG1 or TUBG2. TUBGCP2, TUBGCP3, TUBGCP4, TUBGCP5 and TUBGCP6 assemble in a 5:5:2:1:1 stoichiometry; each is associated with a gamma-tubulin, thereby arranging 14 gamma-tubulins in a helical manner. Gamma-tubulin at the first position is blocked by TUBGCP3 at the last position, allowing 13 protafilaments to grow into a microtubule. Interacts with alpha-beta tubulin heterodimers; the interaction allows microtubules to nucleate from the gTuRC. Phosphorylation at Ser-131 by BRSK1 regulates centrosome duplication, possibly by mediating relocation of gamma-tubulin and its associated proteins from the cytoplasm to the centrosome.

The protein localises to the cytoplasm. It is found in the cytoskeleton. Its subcellular location is the microtubule organizing center. It localises to the centrosome. Tubulin is the major constituent of microtubules, protein filaments consisting of alpha- and beta-tubulin heterodimers. Gamma-tubulin is a key component of the gamma-tubulin ring complex (gTuRC) which mediates microtubule nucleation. The gTuRC regulates the minus-end nucleation of alpha-beta tubulin heterodimers that grow into microtubule protafilaments, a critical step in centrosome duplication and spindle formation. This Bos taurus (Bovine) protein is Tubulin gamma-2 chain (TUBG2).